The following is a 259-amino-acid chain: Phosphate import ATP-binding protein PstB (259 aa).

The 244-residue stretch at 5 to 248 (IDVSGLHVYY…NKIFTKPEKK (244 aa)) folds into the ABC transporter domain. ATP is bound at residue 37 to 44 (GSSGCGKS).

The protein belongs to the ABC transporter superfamily. Phosphate importer (TC 3.A.1.7) family. In terms of assembly, the complex is composed of two ATP-binding proteins (PstB), two transmembrane proteins (PstC and PstA) and a solute-binding protein (PstS).

Its subcellular location is the cell membrane. It catalyses the reaction phosphate(out) + ATP + H2O = ADP + 2 phosphate(in) + H(+). Functionally, part of the ABC transporter complex PstSACB involved in phosphate import. Responsible for energy coupling to the transport system. The sequence is that of Phosphate import ATP-binding protein PstB from Thermobifida fusca (strain YX).